The chain runs to 273 residues: Thiazole synthase (273 aa).

K110 (schiff-base intermediate with DXP) is an active-site residue. 1-deoxy-D-xylulose 5-phosphate contacts are provided by residues G171, 198–199 (AG), and 220–221 (NS).

The protein belongs to the ThiG family. Homotetramer. Forms heterodimers with either ThiH or ThiS.

The protein localises to the cytoplasm. The enzyme catalyses [ThiS sulfur-carrier protein]-C-terminal-Gly-aminoethanethioate + 2-iminoacetate + 1-deoxy-D-xylulose 5-phosphate = [ThiS sulfur-carrier protein]-C-terminal Gly-Gly + 2-[(2R,5Z)-2-carboxy-4-methylthiazol-5(2H)-ylidene]ethyl phosphate + 2 H2O + H(+). It participates in cofactor biosynthesis; thiamine diphosphate biosynthesis. Its function is as follows. Catalyzes the rearrangement of 1-deoxy-D-xylulose 5-phosphate (DXP) to produce the thiazole phosphate moiety of thiamine. Sulfur is provided by the thiocarboxylate moiety of the carrier protein ThiS. In vitro, sulfur can be provided by H(2)S. The protein is Thiazole synthase of Hydrogenovibrio crunogenus (strain DSM 25203 / XCL-2) (Thiomicrospira crunogena).